The following is a 206-amino-acid chain: U-scoloptoxin(08)-Cw1a (206 aa).

The signal sequence occupies residues 1 to 24 (MIFRVNLLFSCFCFVLFVFDFSNA). The propeptide occupies 25-164 (SKYDQGSLNI…DLPELKRRKR (140 aa)). Residues 37 to 43 (RLWRDWE) form an RLWRNWE 1; approximate repeat. The RLWRNWE 2; approximate repeat unit spans residues 71 to 77 (RLWRDWE). The RLWRNWE 3; approximate repeat unit spans residues 104-110 (RLWRDWE). The stretch at 137–143 (RLWRNWE) is one RLWRNWE 4 repeat. The stretch at 164–170 (RLWRNED) is one RLWRNWE 5; approximate repeat.

This sequence belongs to the scoloptoxin-08 family. In terms of processing, contains 3 disulfide bonds. As to expression, expressed by the venom gland.

The protein localises to the secreted. The chain is U-scoloptoxin(08)-Cw1a from Cormocephalus westwoodi (Westwood's green centipede).